A 123-amino-acid chain; its full sequence is Guanine nucleotide exchange factor MSS4 (123 aa).

N-acetylmethionine is present on methionine 1. In terms of domain architecture, MSS4 spans 9–123 (ELVSAEGRNR…YVALERVSHE (115 aa)). Cysteine 23, cysteine 26, cysteine 94, and cysteine 97 together coordinate Zn(2+).

This sequence belongs to the DSS4/MSS4 family. As to quaternary structure, interacts with RAB8A.

Functionally, guanine-nucleotide-releasing protein that acts on members of the SEC4/YPT1/RAB subfamily. Stimulates GDP release from both YPT1, RAB3A and RAB10, but is less active on these proteins than on the SEC4 protein. Might play a general role in vesicular transport. This Mus musculus (Mouse) protein is Guanine nucleotide exchange factor MSS4.